The sequence spans 274 residues: Phosphatidylglycerol--prolipoprotein diacylglyceryl transferase (274 aa).

The next 4 helical transmembrane spans lie at 24 to 44 (WYALAYIVGLLGGWWYTRFLS), 60 to 80 (LLVWATLGTILGGRLGYVVFY), 96 to 116 (WHGGMSFHGGLVGVITATVLF), and 122 to 142 (LSVARVGDLVALVAPLGLFFG). Arg-143 lines the a 1,2-diacyl-sn-glycero-3-phospho-(1'-sn-glycerol) pocket. 3 helical membrane-spanning segments follow: residues 182 to 202 (ATLEGLVLFCLLGLLWRFTAL), 207 to 227 (GQIIGLFLIGYGLSRITAEFF), and 241 to 261 (VTMGQILSLPMILAGIVVFVV).

Belongs to the Lgt family.

The protein resides in the cell inner membrane. The catalysed reaction is L-cysteinyl-[prolipoprotein] + a 1,2-diacyl-sn-glycero-3-phospho-(1'-sn-glycerol) = an S-1,2-diacyl-sn-glyceryl-L-cysteinyl-[prolipoprotein] + sn-glycerol 1-phosphate + H(+). It functions in the pathway protein modification; lipoprotein biosynthesis (diacylglyceryl transfer). Functionally, catalyzes the transfer of the diacylglyceryl group from phosphatidylglycerol to the sulfhydryl group of the N-terminal cysteine of a prolipoprotein, the first step in the formation of mature lipoproteins. This is Phosphatidylglycerol--prolipoprotein diacylglyceryl transferase from Rhodospirillum rubrum (strain ATCC 11170 / ATH 1.1.1 / DSM 467 / LMG 4362 / NCIMB 8255 / S1).